We begin with the raw amino-acid sequence, 461 residues long: General transcription factor IIH subunit 2 (461 aa).

Over residues 1 to 13 the composition is skewed to polar residues; that stretch reads MSKNIYNNNAQNK. Disordered stretches follow at residues 1 to 37 and 61 to 83; these read MSKN…DEDG and LRPS…DRDG. Basic and acidic residues predominate over residues 61–71; it reads LRPSNQEERNT. The VWFA domain maps to 98–275; that stretch reads HLCLILDLSK…ESLMLKCQPP (178 aa). Residues 315–332 form a C4-type zinc finger; sequence CPRCGVKSCELPTDCQIC. Low complexity predominate over residues 423 to 447; the sequence is TNGKTNGNEITNGNGNGNGNENENG. Positions 423–461 are disordered; sequence TNGKTNGNEITNGNGNGNGNENENGNGNGNGNGNGNGLH. Positions 434-459 are 13 X 2 tandem repeat of N-[GE]; the sequence is NGNGNGNGNENENGNGNGNGNGNGNG. A compositionally biased stretch (gly residues) spans 448-461; that stretch reads NGNGNGNGNGNGLH.

The protein belongs to the GTF2H2 family. Component of the 7-subunit TFIIH core complex composed of XPB/repB, XPD/repD, gtf2h1, gtf2h2, gtf2h3, gtf2h4 and gtf2h5, which is active in NER. The core complex associates with the 3-subunit CDK-activating kinase (CAK) module composed of cycH/cyclin H, cdk7 and mnat1 to form the 10-subunit holoenzyme (holo-TFIIH) active in transcription.

Its subcellular location is the nucleus. In terms of biological role, component of the general transcription and DNA repair factor IIH (TFIIH) core complex, which is involved in general and transcription-coupled nucleotide excision repair (NER) of damaged DNA and, when complexed to CAK, in RNA transcription by RNA polymerase II. In NER, TFIIH acts by opening DNA around the lesion to allow the excision of the damaged oligonucleotide and its replacement by a new DNA fragment. In transcription, TFIIH has an essential role in transcription initiation. When the pre-initiation complex (PIC) has been established, TFIIH is required for promoter opening and promoter escape. Phosphorylation of the C-terminal tail (CTD) of the largest subunit of RNA polymerase II by the kinase module CAK controls the initiation of transcription. This chain is General transcription factor IIH subunit 2 (gtf2h2), found in Dictyostelium discoideum (Social amoeba).